Consider the following 228-residue polypeptide: Lipoprotein-releasing system ATP-binding protein LolD (228 aa).

An ABC transporter domain is found at 6-225; the sequence is LEAKDVYKHF…ILHMQDGLWV (220 aa). Position 42–49 (42–49) interacts with ATP; that stretch reads GASGSGKS.

The protein belongs to the ABC transporter superfamily. Lipoprotein translocase (TC 3.A.1.125) family. In terms of assembly, the complex is composed of two ATP-binding proteins (LolD) and two transmembrane proteins (LolC and LolE).

The protein resides in the cell inner membrane. Part of the ABC transporter complex LolCDE involved in the translocation of mature outer membrane-directed lipoproteins, from the inner membrane to the periplasmic chaperone, LolA. Responsible for the formation of the LolA-lipoprotein complex in an ATP-dependent manner. This Acinetobacter baylyi (strain ATCC 33305 / BD413 / ADP1) protein is Lipoprotein-releasing system ATP-binding protein LolD.